The primary structure comprises 149 residues: MHCPFCAAVDTKVIDSRLVSDGSQVRRRRQCLDCNERFTTFEVAELVLPRVIKSDDVREPFNEEKLRRGMLKALEKRPVSSDDVETAISHIKSQLRATGEREVPTKMVGNLVMEALKRLDKVAYIRFASVYRSFEDIREFGEEIARLQD.

A zinc finger lies at Cys3–Cys34. The ATP-cone domain occupies Pro49–Glu139.

Belongs to the NrdR family. Requires Zn(2+) as cofactor.

Functionally, negatively regulates transcription of bacterial ribonucleotide reductase nrd genes and operons by binding to NrdR-boxes. This is Transcriptional repressor NrdR from Yersinia enterocolitica serotype O:8 / biotype 1B (strain NCTC 13174 / 8081).